We begin with the raw amino-acid sequence, 301 residues long: MKIAVLSRNPRLYSTRRLVEAGRERGHEMVVIDTLRAYMNIASHKPQIHYRGQPLEGFDAVIPRIGASVTFYGCAVLRQFEMMGVFPLNESVAIARSRDKLRSLQLLSRKGIGLPVTGFAHSPDDVPDLIEMVGGAPLVIKLLEGTQGIGVVLCETEKAAESVLEAFMGLKHNIMVQEYIKEAGGADIRCFVVGDKVIASMKRQAAPGEFRSNLHRGGSASLIKITPEERMTAIRAARVMGLNVAGVDILRSNHGPLVMEVNSSPGLEGIESTTGKDIAGIIIQYLEKNGGPHLARTKGKG.

The ATP-grasp domain maps to 104–287 (LQLLSRKGIG…IAGIIIQYLE (184 aa)). Residues lysine 141, 178 to 179 (EY), aspartate 187, and 211 to 213 (RSN) each bind ATP. Residues aspartate 248, glutamate 260, and asparagine 262 each contribute to the Mg(2+) site. 3 residues coordinate Mn(2+): aspartate 248, glutamate 260, and asparagine 262.

Belongs to the RimK family. It depends on Mg(2+) as a cofactor. Requires Mn(2+) as cofactor.

The polypeptide is Probable alpha-L-glutamate ligase (Pseudomonas aeruginosa (strain UCBPP-PA14)).